Reading from the N-terminus, the 262-residue chain is MWITQEITPYLRKEYTIEAKLLDVRSDHNILEIFKSNDFGEIAMLNSQLLFKNFLHIESELLAHMGGCTKKELKEVLIVDGFDLELAHQLFKYDTHVDFVQADEKILDSFISFFPHFHGVKNNKNFTHAKQFLDLDIKKYDLIVCLQEPDKHKIDGLKRTLKEDGVFISVAKHPLLEHVSMQNALKNMGEFFSIVMPFVAPLRILSNKGYIYASLKTHPLKDLIAQKIEALKNVGYYNEDIHRAAFALPKNLQEILKENIKS.

The region spanning Met1–Pro249 is the PABS domain. Asn29 provides a ligand contact to S-methyl-5'-thioadenosine. Asp83 contacts spermidine. The active-site Proton acceptor is Asp155.

It belongs to the spermidine/spermine synthase family. Homodimer or homotetramer.

It localises to the cytoplasm. The enzyme catalyses S-adenosyl 3-(methylsulfanyl)propylamine + putrescine = S-methyl-5'-thioadenosine + spermidine + H(+). It participates in amine and polyamine biosynthesis; spermidine biosynthesis; spermidine from putrescine: step 1/1. Catalyzes the irreversible transfer of a propylamine group from the amino donor S-adenosylmethioninamine (decarboxy-AdoMet) to putrescine (1,4-diaminobutane) to yield spermidine. This chain is Polyamine aminopropyltransferase, found in Helicobacter acinonychis (strain Sheeba).